The following is an 849-amino-acid chain: Autoinducer 1 sensor kinase/phosphatase LuxN (849 aa).

Helical transmembrane passes span 9–29, 41–61, 160–180, 196–216, 220–242, 251–275, and 283–301; these read IVYAKAISLLATVAVVMMWLF, VIFGTHHAAYIAYSVCIIAWI, SYFFIGLVSFVVLTLVNLVAM, IAGILVFMLSTAVIHLGMTYF, FSLTWLPPALSISEMLFVGYALL, YIAYLALSVLLVCAIFVLPLGAIFI, and WLIAIPICALIGITWQLLY. Residues 468-683 enclose the Histidine kinase domain; sequence SIAHEMRNPL…EFHLYFPVVP (216 aa). H471 carries the post-translational modification Phosphohistidine; by autocatalysis. The region spanning 722–835 is the Response regulatory domain; it reads TVLIVDDKEV…ALRHVLGNWL (114 aa). At D771 the chain carries 4-aspartylphosphate.

Its subcellular location is the cell inner membrane. It catalyses the reaction ATP + protein L-histidine = ADP + protein N-phospho-L-histidine.. Its function is as follows. At low cell density, in the absence of AI-1 (autoinducer 1), LuxN has a kinase activity and autophosphorylates on His-471. The phosphoryl group is then transferred on Asp-771 of the response regulator domain. The phosphoryl group is transferred to LuxU, and ultimately to LuxO. At high cell density, in the presence of AI-1, the kinase activity is inactivated, and the response regulator domain has a phosphatase activity. LuxN phosphatase acts on itself. As LuxU could function to establish an equilibrium between the aspartyl-phosphate of LuxN and the aspartyl-phosphate of LuxO, LuxU transfers phosphate from LuxO to LuxN and finally phosphate is drained from the system. The sequence is that of Autoinducer 1 sensor kinase/phosphatase LuxN (luxN) from Vibrio harveyi (Beneckea harveyi).